A 287-amino-acid chain; its full sequence is ATP synthase gamma chain (287 aa).

It belongs to the ATPase gamma chain family. In terms of assembly, F-type ATPases have 2 components, CF(1) - the catalytic core - and CF(0) - the membrane proton channel. CF(1) has five subunits: alpha(3), beta(3), gamma(1), delta(1), epsilon(1). CF(0) has three main subunits: a, b and c.

The protein localises to the cell inner membrane. Functionally, produces ATP from ADP in the presence of a proton gradient across the membrane. The gamma chain is believed to be important in regulating ATPase activity and the flow of protons through the CF(0) complex. The chain is ATP synthase gamma chain from Geotalea daltonii (strain DSM 22248 / JCM 15807 / FRC-32) (Geobacter daltonii).